A 75-amino-acid chain; its full sequence is Exodeoxyribonuclease 7 small subunit (75 aa).

It belongs to the XseB family. Heterooligomer composed of large and small subunits.

Its subcellular location is the cytoplasm. It carries out the reaction Exonucleolytic cleavage in either 5'- to 3'- or 3'- to 5'-direction to yield nucleoside 5'-phosphates.. Bidirectionally degrades single-stranded DNA into large acid-insoluble oligonucleotides, which are then degraded further into small acid-soluble oligonucleotides. This chain is Exodeoxyribonuclease 7 small subunit, found in Pelobacter propionicus (strain DSM 2379 / NBRC 103807 / OttBd1).